The sequence spans 443 residues: Monooxygenase asqM (443 aa).

The protein belongs to the aromatic-ring hydroxylase family. Requires FAD as cofactor.

It participates in secondary metabolite biosynthesis. It functions in the pathway alkaloid biosynthesis. Its pathway is mycotoxin biosynthesis. Monooxygenase; part of the gene cluster that mediates the biosynthesis of the aspoquinolone mycotoxins. The role of asqM within the aspoquinolone pathway has still to be determined. The first step of the pathway is catalyzed by the nonribosomal peptide synthetase asqK that condenses anthranilic acid and O-methyl-L-tyrosine to produce 4'-methoxycyclopeptin. 4'-methoxycyclopeptin is then converted to 4'-methoxydehydrocyclopeptin by the ketoglutarate-dependent dioxygenase asqJ. AsqJ also converts its first product 4'-methoxydehydrocyclopeptin to 4'-methoxycyclopenin. The following conversion of 4'-methoxycyclopenin into 4'-methoxyviridicatin is catalyzed by the cyclopenase asqI. 4'-methoxyviridicatin is the precursor of quinolone natural products, and is further converted to quinolinone B. The prenyltransferase asqH1 then catalyzes the canonical Friedel-Crafts alkylation of quinolinone B with dimethylallyl cation to yield dimethylallyl quinolone, which is subjected to FAD-dependent dehydrogenation by the FAD-linked oxidoreductase asqF to yield conjugated aryl diene. The delta(3') double bond then serves as the site of the second alkylation with DMAPP catalyzed by the prenyltransferase asqH2 to yield a carbenium ion intermediate, which can be attacked by H(2)O to yield a styrenyl quinolone containing a C3'-hydroxyprenyl chain. The FAD-dependent monooxygenase asqG performs epoxidation of the terminal C7'-C8' olefin. Finally, after dehydratation of the epoxide at C3 by asqC, the quinolone epoxide rearrangement protein asqO catalyzes an enzymatic 3-exo-tet cyclization to yield the cyclopropyl-THF ring system in aspoquinolone. The polypeptide is Monooxygenase asqM (Emericella nidulans (strain FGSC A4 / ATCC 38163 / CBS 112.46 / NRRL 194 / M139) (Aspergillus nidulans)).